Reading from the N-terminus, the 379-residue chain is Serpin B5 (379 aa).

N-linked (GlcNAc...) asparagine glycosylation is found at N133, N176, and N361.

This sequence belongs to the serpin family. Ov-serpin subfamily.

It is found in the secreted. Its subcellular location is the extracellular space. May not exhibit serine protease inhibitory activity. In Xenopus tropicalis (Western clawed frog), this protein is Serpin B5 (serpinb5).